A 243-amino-acid polypeptide reads, in one-letter code: Lectin-4 (243 aa).

A Pyrrolidone carboxylic acid modification is found at Gln1. Asn5 carries an N-linked (GlcNAc...) asparagine; in alpha chain glycan. Asn18 carries N-linked (GlcNAc...) asparagine glycosylation. The Mn(2+) site is built by Glu129 and Asp131. Ca(2+) is bound by residues Asp131, Trp133, Asn135, and Asp140. Residues Asp140 and His145 each coordinate Mn(2+).

Belongs to the leguminous lectin family. Homodimer of Alpha and Beta forms. Post-translationally, N-glycosylation of Asn-5 converts form Beta to form Alpha.

Functionally, lectin which has a strong affinity for both the Lewis b and y human blood-group determinants. This is Lectin-4 from Griffonia simplicifolia (Bandeiraea simplicifolia).